The following is a 460-amino-acid chain: Nucleosome assembly protein 1-like 2 (460 aa).

Basic and acidic residues-rich tracts occupy residues 1–11 and 27–36; these read MAESENRKELS and LGEHLERGED. 2 disordered regions span residues 1–88 and 214–238; these read MAES…ADRP and EEEE…EDPK. The segment covering 214 to 236 has biased composition (acidic residues); that stretch reads EEEEEEEEDDIEATGEENKEEED. The Nuclear localization signal signature appears at 346–352; it reads IKKKQKH.

This sequence belongs to the nucleosome assembly protein (NAP) family.

The protein resides in the nucleus. Functionally, acidic protein which may be involved in interactions with other proteins or DNA. The polypeptide is Nucleosome assembly protein 1-like 2 (NAP1L2) (Homo sapiens (Human)).